The primary structure comprises 250 residues: Small ribosomal subunit protein uS3z (250 aa).

The 72-residue stretch at 21 to 92 folds into the KH type-2 domain; the sequence is LNEVLTRELA…SVELYAEKVN (72 aa).

The protein belongs to the universal ribosomal protein uS3 family. Interacts with SNRNP35.

The protein is Small ribosomal subunit protein uS3z (RPS3A) of Arabidopsis thaliana (Mouse-ear cress).